Reading from the N-terminus, the 185-residue chain is Ribosome-recycling factor (185 aa).

Belongs to the RRF family.

The protein resides in the cytoplasm. Its function is as follows. Responsible for the release of ribosomes from messenger RNA at the termination of protein biosynthesis. May increase the efficiency of translation by recycling ribosomes from one round of translation to another. This chain is Ribosome-recycling factor, found in Legionella pneumophila (strain Paris).